A 337-amino-acid chain; its full sequence is DNA-directed RNA polymerase subunit alpha (337 aa).

Positions 1-233 are alpha N-terminal domain (alpha-NTD); that stretch reads MIQKNWQELI…DQLALFINFK (233 aa). Residues 249-337 form an alpha C-terminal domain (alpha-CTD) region; it reads FNPALLKKVD…DLAKRYEDQY (89 aa).

It belongs to the RNA polymerase alpha chain family. In terms of assembly, homodimer. The RNAP catalytic core consists of 2 alpha, 1 beta, 1 beta' and 1 omega subunit. When a sigma factor is associated with the core the holoenzyme is formed, which can initiate transcription.

It carries out the reaction RNA(n) + a ribonucleoside 5'-triphosphate = RNA(n+1) + diphosphate. Its function is as follows. DNA-dependent RNA polymerase catalyzes the transcription of DNA into RNA using the four ribonucleoside triphosphates as substrates. The polypeptide is DNA-directed RNA polymerase subunit alpha (Bartonella henselae (strain ATCC 49882 / DSM 28221 / CCUG 30454 / Houston 1) (Rochalimaea henselae)).